Reading from the N-terminus, the 312-residue chain is Phosphate system positive regulatory protein PHO4 (312 aa).

Residues 1 to 31 (MGRTTSEGIHGFVDDLEPKSSILDKVGDFIT) form an interaction with PHO80 region. The tract at residues 35-71 (KRHDGREDFNEQNDELNSQENHNSSENGNENENEQDS) is disordered. Positions 49–62 (ELNSQENHNSSENG) are enriched in low complexity. The 9aaTAD motif lies at 75–83 (DDLDRAFEL). Residues 75–99 (DDLDRAFELVEGMDMDWMMPSHAHH) form a transcription activation domain region. Phosphoserine; by PHO85 is present on residues Ser100, Ser114, Ser128, and Ser152. Composition is skewed to polar residues over residues 138 to 154 (TTSA…SSPY) and 196 to 210 (PSNS…TAKT). The interval 138–259 (TTSANKVTKN…DKRESHKHAE (122 aa)) is disordered. The Nuclear localization signal motif lies at 140–166 (SANKVTKNKSNSSPYLNKRRGKPGPDS). Residues 156–200 (NKRRGKPGPDSATSLFELPDSVIPTPKPKPKPKQYPKVILPSNST) form an interaction with PHO80 region. An interaction with PHO2 region spans residues 201–218 (RRVSPVTAKTSSSAEGVV). The involved in oligomerization stretch occupies residues 203–227 (VSPVTAKTSSSAEGVVVASESPVIA). A Phosphoserine modification is found at Ser204. Residues 211–235 (SSSAEGVVVASESPVIAPHGSSHSR) are compositionally biased toward low complexity. A Phosphoserine; by PHO85 modification is found at Ser223. Phosphoserine occurs at positions 242 and 243. The segment covering 248 to 259 (DDDKRESHKHAE) has biased composition (basic and acidic residues). Residues 250–306 (DKRESHKHAEQARRNRLAVALHELASLIPAEWKQQNVSAAPSKATTVEAACRYIRHL) enclose the bHLH domain.

Binds DNA as a homodimer. Interacts with transcription factor PHO2 and binds cooperatively to PHO5 UAS. Interacts with the cyclin-CDK PHO80-PHO85 and the CDK inhibitor (CKI) PHO81. In terms of processing, phosphorylated by the cyclin-CDK PHO80-PHO85 at five residues under high-phosphate conditions, preventing PHO4 from activating the structural PHO genes. Phosphorylation of Ser-114 and Ser-128 promotes nuclear export. Phosphorylation of Ser-152 decreases nuclear import. Phosphorylation of Ser-223 decreases the binding affinity for PHO2.

Its subcellular location is the cytoplasm. It is found in the nucleus. In terms of biological role, transcriptional activator that regulates the expression of repressible phosphatase under phosphate starvation conditions. Binds to the upstream activating sequence (UAS) of several phosphatase encoding PHO genes. Inhibited by the cyclin-CDK PHO80-PHO85 under high-phosphate conditions. The chain is Phosphate system positive regulatory protein PHO4 (PHO4) from Saccharomyces cerevisiae (strain ATCC 204508 / S288c) (Baker's yeast).